The sequence spans 250 residues: MMLKPEGLKLIDENGRRLDGRKKYELRPIKMKVGVLKNANGSAYIEWGKNKIIAAVYGPREIHPKHLQRPDRAILRVRYNMAPFSVEERKKPGPDRRSIEISKVIRGALEPALILEMFPRTAIDVFIEVLQADAGTRVAGITAASLALADAGIPMRDLVAACSAGKIEGEIVLDLNKEEDNYGEADVPVAIMPIKNDITLLQMDGYLTKEEFIEAVKLAIKGAKAVYQKQREALKEKYLKIAQEVEGSEQ.

It belongs to the RNase PH family. Rrp41 subfamily. As to quaternary structure, component of the archaeal exosome complex. Forms a hexameric ring-like arrangement composed of 3 Rrp41-Rrp42 heterodimers. The hexameric ring associates with a trimer of Rrp4 and/or Csl4 subunits.

The protein resides in the cytoplasm. Its function is as follows. Catalytic component of the exosome, which is a complex involved in RNA degradation. Has 3'-&gt;5' exoribonuclease activity. Can also synthesize heteromeric RNA-tails. This Pyrococcus furiosus (strain ATCC 43587 / DSM 3638 / JCM 8422 / Vc1) protein is Exosome complex component Rrp41.